The following is a 206-amino-acid chain: Putative metal transport protein HI_1621 (206 aa).

6 helical membrane-spanning segments follow: residues 6 to 26, 38 to 58, 72 to 92, 94 to 114, 136 to 156, and 165 to 185; these read GVLH…GIAV, LTAL…PVGI, FLGW…VIFF, FGGF…AVIA, IGAG…VLML, and LVWL…IISV.

It belongs to the CbiM family.

Its subcellular location is the cell membrane. In terms of biological role, may be involved in metal transport. The protein is Putative metal transport protein HI_1621 of Haemophilus influenzae (strain ATCC 51907 / DSM 11121 / KW20 / Rd).